A 102-amino-acid polypeptide reads, in one-letter code: Spexin prohormone 1 (102 aa).

Residues 1–26 form the signal peptide; sequence MKDLRTLAAYALALLLLATFVSYSRS. A propeptide spanning residues 27 to 35 is cleaved from the precursor; that stretch reads APMGSFQRR. The residue at position 49 (Gln-49) is a Glutamine amide. The propeptide occupies 50–102; sequence GRRFVSEDRNEGDLYDTIRLESQSQNTENLSISKAAAFLLNVLQQARDEGEPY.

This sequence belongs to the spexin family. In terms of tissue distribution, expressed in the anterior hypothalamus, ventromedial thalamic nucleus and medial longitudinal fasciculus of the brain (at protein level). Widely expressed. Expressed predominantly in the spleen, kidney, liver and testis. Expressed in olfactory bulb, pituitary, telencephalon, diencephalons, spinal cord, optic tectum, cerebellum and hypothalamus of the brain.

It localises to the secreted. It is found in the extracellular space. The protein resides in the cytoplasmic vesicle. Its subcellular location is the secretory vesicle. Functionally, plays a role in the regulation of food intake and body weight and in reproduction. May also play a role as a central modulator of cardiovascular and renal function and nociception. Its function is as follows. Brain administration of the peptide inhibits food consumption. May function as a satiety factor for feeding control. Involved in the negative regulation of the reproductive axis by inhibiting luteinizing hormone secretion from pituitary cells. The sequence is that of Spexin prohormone 1 (spx) from Carassius auratus (Goldfish).